We begin with the raw amino-acid sequence, 479 residues long: UDP-glycosyltransferase 85A5 (479 aa).

Residues Ser301, 358–360, 375–383, and 397–400 contribute to the UDP-alpha-D-glucose site; these read CPQ, HSGWNSTLE, and FAEQ.

Belongs to the UDP-glycosyltransferase family. Expressed in roots, shoots and leaves.

The polypeptide is UDP-glycosyltransferase 85A5 (UGT85A5) (Arabidopsis thaliana (Mouse-ear cress)).